Here is a 358-residue protein sequence, read N- to C-terminus: Peptide chain release factor 1 (358 aa).

Q234 carries the N5-methylglutamine modification.

This sequence belongs to the prokaryotic/mitochondrial release factor family. Methylated by PrmC. Methylation increases the termination efficiency of RF1.

The protein localises to the cytoplasm. In terms of biological role, peptide chain release factor 1 directs the termination of translation in response to the peptide chain termination codons UAG and UAA. The polypeptide is Peptide chain release factor 1 (Akkermansia muciniphila (strain ATCC BAA-835 / DSM 22959 / JCM 33894 / BCRC 81048 / CCUG 64013 / CIP 107961 / Muc)).